Consider the following 389-residue polypeptide: MGTNLSVPNPLGFFPDHQLDPAFKANSDNPDWDLNPHKDNWPDSNKVGVGAFGPGFTPPHGGLLGWSPQAQGILTTVPTAPPPASTNRQLGRKPTPLSPPLRDTHPQAMQWNSTTFHQTLQDPRVRALYFPAGGSSSGTVNPVQNTASSISSILSTTGDPVPNMENIASGLLGPLLVLQAGFFSLTKILTIPLSLDSWWTSLNFLGETPVCLGQNSQSQISSHSPTCCPPICPGYRWMCLRRFIIFLCILLLCLIFLLVLLDYQGMLPVCPLIPGSSTTSTGPCKTCTTPAQGTSMFPSCCCTKPTDGNCTCIPIPSSWAFAKYLWEWASVRFSWLSLLVPFVQWFVGLSPTVWLSVIWMMWFWGPSLYNILSPFMPLLPIFFCLWVYI.

Met1 bears the N-acetylmethionine mark. Residue Gly2 is the site of N-myristoyl glycine; by host attachment. Residues 2–108 are pre-S1; it reads GTNLSVPNPL…PPLRDTHPQA (107 aa). The interval 2–163 is pre-S; it reads GTNLSVPNPL…LSTTGDPVPN (162 aa). Over 2–170 the chain is Virion surface; in external conformation; sequence GTNLSVPNPL…VPNMENIASG (169 aa). Topologically, residues 2-242 are intravirion; in internal conformation; the sequence is GTNLSVPNPL…PGYRWMCLRR (241 aa). The segment at 109-163 is pre-S2; it reads MQWNSTTFHQTLQDPRVRALYFPAGGSSSGTVNPVQNTASSISSILSTTGDPVPN. A helical transmembrane segment spans residues 171-191; that stretch reads LLGPLLVLQAGFFSLTKILTI. The Intravirion; in external conformation segment spans residues 192–242; sequence PLSLDSWWTSLNFLGETPVCLGQNSQSQISSHSPTCCPPICPGYRWMCLRR. The helical transmembrane segment at 243–263 threads the bilayer; sequence FIIFLCILLLCLIFLLVLLDY. Residues 264 to 337 are Virion surface-facing; sequence QGMLPVCPLI…WASVRFSWLS (74 aa). N-linked (GlcNAc...) asparagine; by host glycosylation occurs at Asn309. Residues 338–358 form a helical membrane-spanning segment; that stretch reads LLVPFVQWFVGLSPTVWLSVI. Over 359–364 the chain is Intravirion; sequence WMMWFW. The helical transmembrane segment at 365–387 threads the bilayer; the sequence is GPSLYNILSPFMPLLPIFFCLWV. Residues 388-389 are Virion surface-facing; that stretch reads YI.

This sequence belongs to the orthohepadnavirus major surface antigen family. As to quaternary structure, interacts (via its myristoylated pre-S1 region) with the host SLC10A1/NTCP; this interaction is essential for viral entry. In its internal form (Li-HBsAg), interacts with the capsid protein and with the isoform S. Interacts with host chaperone CANX. In terms of assembly, associates with host chaperone CANX through its pre-S2 N glycan; this association may be essential for isoform M proper secretion. As to quaternary structure, interacts with isoform L. Interacts with the antigens of satellite virus HDV (HDVAgs); this interaction is required for encapsidation of HDV genomic RNA. Post-translationally, isoform M is N-terminally acetylated by host at a ratio of 90%, and N-glycosylated by host at the pre-S2 region. Myristoylated; this modification is essential for its interaction with the host protein SLC10A1/NTCP.

The protein resides in the virion membrane. In terms of biological role, the large envelope protein exists in two topological conformations, one which is termed 'external' or Le-HBsAg and the other 'internal' or Li-HBsAg. In its external conformation the protein attaches the virus to cell receptors and thereby initiating infection. This interaction determines the species specificity and liver tropism. This attachment induces virion internalization predominantly through caveolin-mediated endocytosis. The large envelope protein also assures fusion between virion membrane and endosomal membrane. In its internal conformation the protein plays a role in virion morphogenesis and mediates the contact with the nucleocapsid like a matrix protein. Its function is as follows. The middle envelope protein plays an important role in the budding of the virion. It is involved in the induction of budding in a nucleocapsid independent way. In this process the majority of envelope proteins bud to form subviral lipoprotein particles of 22 nm of diameter that do not contain a nucleocapsid. The sequence is that of Large envelope protein from Hepatitis B virus genotype B2 (isolate Indonesia/pIDW420/1988) (HBV-B).